Here is a 203-residue protein sequence, read N- to C-terminus: Holliday junction branch migration complex subunit RuvA (203 aa).

A domain I region spans residues 1–64 (MIGRLRGIIL…EDAQLLYGFN (64 aa)). A domain II region spans residues 65 to 142 (NKQERTLFKE…KGLHGDLFTP (78 aa)). The segment at 143–154 (AADLVLTSPASP) is flexible linker. Positions 155-203 (ATDDAEQEAVAALVALGYKPQEASRMVSKIARPDASSETLIREALRAAL) are domain III.

This sequence belongs to the RuvA family. As to quaternary structure, homotetramer. Forms an RuvA(8)-RuvB(12)-Holliday junction (HJ) complex. HJ DNA is sandwiched between 2 RuvA tetramers; dsDNA enters through RuvA and exits via RuvB. An RuvB hexamer assembles on each DNA strand where it exits the tetramer. Each RuvB hexamer is contacted by two RuvA subunits (via domain III) on 2 adjacent RuvB subunits; this complex drives branch migration. In the full resolvosome a probable DNA-RuvA(4)-RuvB(12)-RuvC(2) complex forms which resolves the HJ.

Its subcellular location is the cytoplasm. Functionally, the RuvA-RuvB-RuvC complex processes Holliday junction (HJ) DNA during genetic recombination and DNA repair, while the RuvA-RuvB complex plays an important role in the rescue of blocked DNA replication forks via replication fork reversal (RFR). RuvA specifically binds to HJ cruciform DNA, conferring on it an open structure. The RuvB hexamer acts as an ATP-dependent pump, pulling dsDNA into and through the RuvAB complex. HJ branch migration allows RuvC to scan DNA until it finds its consensus sequence, where it cleaves and resolves the cruciform DNA. This chain is Holliday junction branch migration complex subunit RuvA, found in Citrobacter koseri (strain ATCC BAA-895 / CDC 4225-83 / SGSC4696).